Reading from the N-terminus, the 134-residue chain is Small ribosomal subunit protein uS8c (134 aa).

This sequence belongs to the universal ribosomal protein uS8 family. Part of the 30S ribosomal subunit.

It localises to the plastid. Its subcellular location is the chloroplast. Its function is as follows. One of the primary rRNA binding proteins, it binds directly to 16S rRNA central domain where it helps coordinate assembly of the platform of the 30S subunit. The sequence is that of Small ribosomal subunit protein uS8c (rps8) from Cucumis sativus (Cucumber).